A 333-amino-acid chain; its full sequence is Ketol-acid reductoisomerase (NADP(+)) (333 aa).

Residues 1 to 171 (MSNDTQPTIA…GGARANIIKT (171 aa)) form the KARI N-terminal Rossmann domain. NADP(+) contacts are provided by residues 14–17 (YGSQ), Arg37, Thr42, and 72–75 (DMVQ). The active site involves His97. Gly123 is a binding site for NADP(+). In terms of domain architecture, KARI C-terminal knotted spans 172–317 (TFKEETETDL…KKLRAKMVWL (146 aa)). 4 residues coordinate Mg(2+): Asp180, Glu184, Glu216, and Glu220. Ser241 provides a ligand contact to substrate.

Belongs to the ketol-acid reductoisomerase family. It depends on Mg(2+) as a cofactor.

It catalyses the reaction (2R)-2,3-dihydroxy-3-methylbutanoate + NADP(+) = (2S)-2-acetolactate + NADPH + H(+). The enzyme catalyses (2R,3R)-2,3-dihydroxy-3-methylpentanoate + NADP(+) = (S)-2-ethyl-2-hydroxy-3-oxobutanoate + NADPH + H(+). Its pathway is amino-acid biosynthesis; L-isoleucine biosynthesis; L-isoleucine from 2-oxobutanoate: step 2/4. The protein operates within amino-acid biosynthesis; L-valine biosynthesis; L-valine from pyruvate: step 2/4. In terms of biological role, involved in the biosynthesis of branched-chain amino acids (BCAA). Catalyzes an alkyl-migration followed by a ketol-acid reduction of (S)-2-acetolactate (S2AL) to yield (R)-2,3-dihydroxy-isovalerate. In the isomerase reaction, S2AL is rearranged via a Mg-dependent methyl migration to produce 3-hydroxy-3-methyl-2-ketobutyrate (HMKB). In the reductase reaction, this 2-ketoacid undergoes a metal-dependent reduction by NADPH to yield (R)-2,3-dihydroxy-isovalerate. This chain is Ketol-acid reductoisomerase (NADP(+)), found in Xanthomonas campestris pv. campestris (strain 8004).